The sequence spans 256 residues: Ribosomal RNA small subunit methyltransferase A (256 aa).

S-adenosyl-L-methionine contacts are provided by histidine 12, leucine 14, glycine 39, glutamate 60, aspartate 83, and asparagine 101.

It belongs to the class I-like SAM-binding methyltransferase superfamily. rRNA adenine N(6)-methyltransferase family. RsmA subfamily.

Its subcellular location is the cytoplasm. The enzyme catalyses adenosine(1518)/adenosine(1519) in 16S rRNA + 4 S-adenosyl-L-methionine = N(6)-dimethyladenosine(1518)/N(6)-dimethyladenosine(1519) in 16S rRNA + 4 S-adenosyl-L-homocysteine + 4 H(+). Its function is as follows. Specifically dimethylates two adjacent adenosines (A1518 and A1519) in the loop of a conserved hairpin near the 3'-end of 16S rRNA in the 30S particle. May play a critical role in biogenesis of 30S subunits. This chain is Ribosomal RNA small subunit methyltransferase A, found in Nitrosomonas eutropha (strain DSM 101675 / C91 / Nm57).